The sequence spans 298 residues: Protein FAM221A (298 aa).

Polar residues predominate over residues S241–S257. The segment at S241 to E263 is disordered.

This sequence belongs to the FAM221 family.

This chain is Protein FAM221A (FAM221A), found in Homo sapiens (Human).